Here is a 533-residue protein sequence, read N- to C-terminus: MKPRSGLEEAQRRQASDIRVFASSCTMHGLGHIFGPGGLTLRRGLWATAVLLSLAAFLYQVAERVRYYGEFHHKTTLDERESHQLTFPAVTLCNINPLRRSRLTPNDLHWAGTALLGLDPAEHAAYLRALGQPPAPPGFMPSPTFDMAQLYARAGHSLEDMLLDCRYRGQPCGPENFTVIFTRMGQCYTFNSGAHGAELLTTPKGGAGNGLEIMLDVQQEEYLPIWKDMEETPFEVGIRVQIHSQDEPPAIDQLGFGAAPGHQTFVSCQQQQLSFLPPPWGDCNTASLDPDDFDPEPSDPLGSPRPRPSPPYSLIGCRLACESRYVARKCGCRMMHMPGNSPVCSPQQYKDCASPALDAMLRKDTCVCPNPCATTRYAKELSMVRIPSRASARYLARKYNRSESYITENVLVLDIFFEALNYEAVEQKAAYEVSELLGDIGGQMGLFIGASLLTILEILDYLCEVFQDRVLGYFWNRRSAQKRSGNTLLQEELNGHRTHVPHLSLGPRPPTTPCAVTKTLSASHRTCYLVTRL.

Topologically, residues Met-1–Arg-19 are cytoplasmic. The chain crosses the membrane as a helical span at residues Val-20 to Thr-40. Thr-40 is modified (phosphothreonine; by PKC). Residues Leu-41–Glu-435 lie on the Extracellular side of the membrane. 7 cysteine pairs are disulfide-bonded: Cys-93-Cys-187, Cys-165-Cys-172, Cys-283-Cys-372, Cys-317-Cys-368, Cys-321-Cys-366, Cys-330-Cys-352, and Cys-332-Cys-344. Asn-176 carries N-linked (GlcNAc...) asparagine glycosylation. The tract at residues Ala-286–Pro-310 is disordered. The N-linked (GlcNAc...) asparagine glycan is linked to Asn-400. Residues Leu-436–Leu-456 form a helical membrane-spanning segment. The short motif at Gly-449–Ser-451 is the GAS motif; ion selectivity filter element. At Glu-457 to Leu-533 the chain is on the cytoplasmic side. Ser-523 is subject to Phosphoserine; by PKC. The PDZ-binding motif lies at Val-530–Leu-533.

This sequence belongs to the amiloride-sensitive sodium channel (TC 1.A.6) family. ASIC3 subfamily. Can form homotrimeric channels. Heterotrimer; forms functional heterotrimers producing channel with different properties. Forms heterotrimers with ASIC2; gives rise to a biphasic current with a sustained current which discriminates poorly between Na(+) and K(+). Interacts with STOM; inhibits ASIC3 acid-evoked current. Interacts with LIN7B (via PDZ domain); increases ASIC3 expression at the plasma membrane. Interacts with MAGI1 (via PDZ domain); probably regulates ASIC3. Interacts with GOPC (via PDZ domain); probably regulates ASIC3. Interacts with DLG4 (via PDZ domain); reduces ASIC3 expression at the plasma membrane. Post-translationally, could be phosphorylated by PKC, promoting activation of ASIC2/ASIC3 heterotrimers. In terms of tissue distribution, expressed in sciatic nerve and dorsal root ganglion (at protein level). Expressed in sensory neurons of dorsal root ganglion. Expressed in Golgi interneurons in the granular layer. Also found in superior cervical ganglia, spinal cord and brain stem.

Its subcellular location is the cell membrane. It localises to the cytoplasm. It catalyses the reaction Na(+)(in) = Na(+)(out). The enzyme catalyses K(+)(in) = K(+)(out). The catalysed reaction is Ca(2+)(in) = Ca(2+)(out). Inhibited by the diuretic drug amiloride. Inhibited by gadolinium ions. Inhibited by extracellular Ca(2+). Activated by lactate. Salicylic acid, diclofenac and aspirin inhibit the sustained current component. Activated by the vertebrate neuropeptides NPFF and NPSF, and the related FMRFamide. Specifically and reversibly inhibited by the a sea anemone toxin APETx2. ASIC3-containing channels are potentiated by the cono-RFamide CNF-Tx1.1, and probably CNF-Tx1.2 and CNF-Tx1.3 (AC P0DL71). Functionally, forms pH-gated heterotrimeric sodium channels that act as postsynaptic excitatory receptors in the nervous system. Upon extracellular acidification, these channels generate a biphasic current with a fast inactivating and a slow sustained phase. ASIC3 is more sensitive to protons and gates between closed, open, and desensitized states faster than other ASICs. Displays high selectivity for sodium ions but can also permit the permeation of other cations. As a neuronal acid sensor, probably contributes to mechanoreception, acid nociception, and heat nociception. By forming heterotrimeric channels with ASIC2, generates a biphasic current with a fast inactivating and a slow sustained phase, which in sensory neurons is proposed to mediate the pain induced by acidosis that occurs in ischemic, damaged or inflamed tissues. The polypeptide is Acid-sensing ion channel 3 (Rattus norvegicus (Rat)).